A 492-amino-acid polypeptide reads, in one-letter code: KRAB-A domain-containing protein 2 (492 aa).

The KRAB domain maps to 36 to 117; sequence LFQEATAFEN…MREKFLMSVT (82 aa). Serine 115 is subject to Phosphoserine. The residue at position 117 (threonine 117) is a Phosphothreonine. One can recognise an Integrase catalytic domain in the interval 247–415; it reads RGLAPKPMTF…SPFEAMFGYK (169 aa). Positions 427 to 457 form a coiled coil; the sequence is RETVATLQTEEELEIAEEQLENSLWIRQEER. Basic and acidic residues predominate over residues 455–465; that stretch reads EERAEIGADRS. Residues 455 to 492 form a disordered region; that stretch reads EERAEIGADRSDMDDDMDPTPEASEPSTSQGTSGLLCW. Over residues 479–492 the composition is skewed to polar residues; the sequence is EPSTSQGTSGLLCW.

The chain is KRAB-A domain-containing protein 2 (KRBA2) from Homo sapiens (Human).